Reading from the N-terminus, the 528-residue chain is Chaperonin GroEL, chloroplastic (528 aa).

ATP is bound by residues 29–32 (TLGP), 86–90 (DGTTT), Gly414, and Asp496.

This sequence belongs to the chaperonin (HSP60) family. Forms a cylinder of 14 subunits composed of two heptameric rings stacked back-to-back. Interacts with the co-chaperonin GroES.

The protein localises to the plastid. The protein resides in the chloroplast. It carries out the reaction ATP + H2O + a folded polypeptide = ADP + phosphate + an unfolded polypeptide.. Its function is as follows. Together with its co-chaperonin GroES, plays an essential role in assisting protein folding. The GroEL-GroES system forms a nano-cage that allows encapsulation of the non-native substrate proteins and provides a physical environment optimized to promote and accelerate protein folding. The protein is Chaperonin GroEL, chloroplastic of Gracilaria tenuistipitata var. liui (Red alga).